Reading from the N-terminus, the 504-residue chain is ATP synthase subunit alpha (504 aa).

169-176 (GDRQTGKT) lines the ATP pocket.

It belongs to the ATPase alpha/beta chains family. F-type ATPases have 2 components, CF(1) - the catalytic core - and CF(0) - the membrane proton channel. CF(1) has five subunits: alpha(3), beta(3), gamma(1), delta(1), epsilon(1). CF(0) has three main subunits: a(1), b(2) and c(9-12). The alpha and beta chains form an alternating ring which encloses part of the gamma chain. CF(1) is attached to CF(0) by a central stalk formed by the gamma and epsilon chains, while a peripheral stalk is formed by the delta and b chains.

Its subcellular location is the cell membrane. The enzyme catalyses ATP + H2O + 4 H(+)(in) = ADP + phosphate + 5 H(+)(out). Its function is as follows. Produces ATP from ADP in the presence of a proton gradient across the membrane. The alpha chain is a regulatory subunit. The polypeptide is ATP synthase subunit alpha (Clostridium botulinum (strain Eklund 17B / Type B)).